Consider the following 328-residue polypeptide: uncharacterized protein (328 aa).

The region spanning 10-55 (KMGFGHAMLLKMGWKGKGLGVEEDGRTEIIVNKKKQDKVGVGASIS) is the G-patch domain. The tract at residues 97–291 (EKITFKRTIK…KKSFSVSKTR (195 aa)) is disordered. Residues 101–110 (FKRTIKKNSK) show a composition bias toward basic residues. Over residues 116 to 126 (SDSDSDSDSES) the composition is skewed to acidic residues. 2 stretches are compositionally biased toward low complexity: residues 141–158 (DSDS…SSSS) and 210–240 (SSSS…SSSE). Residues 248 to 257 (KNKNKNKNKK) show a composition bias toward basic residues.

This is an uncharacterized protein from Dictyostelium discoideum (Social amoeba).